A 336-amino-acid polypeptide reads, in one-letter code: L-rhamnono-gamma-lactonase (336 aa).

Belongs to the metallo-dependent hydrolases superfamily. A divalent metal cation serves as cofactor.

It catalyses the reaction L-rhamnono-1,4-lactone + H2O = L-rhamnonate + H(+). Inhibited by Zn(2+), Fe(2+) and Cu(2+), but not by EDTA. Its function is as follows. Hydrolase with high substrate specificity for L-rhamnono-1,4-lactone. Catalyzes the second step in an alternative pathway for rhamnose utilization that does not involve phosphorylated intermediates. The polypeptide is L-rhamnono-gamma-lactonase (LRA2) (Scheffersomyces stipitis (strain ATCC 58785 / CBS 6054 / NBRC 10063 / NRRL Y-11545) (Yeast)).